The following is a 306-amino-acid chain: tRNA dimethylallyltransferase (306 aa).

Residue 9-16 participates in ATP binding; sequence GPTAIGKT. Residue 11 to 16 coordinates substrate; sequence TAIGKT. The interval 34–37 is interaction with substrate tRNA; that stretch reads DSMQ.

It belongs to the IPP transferase family. As to quaternary structure, monomer. Requires Mg(2+) as cofactor.

It catalyses the reaction adenosine(37) in tRNA + dimethylallyl diphosphate = N(6)-dimethylallyladenosine(37) in tRNA + diphosphate. Its function is as follows. Catalyzes the transfer of a dimethylallyl group onto the adenine at position 37 in tRNAs that read codons beginning with uridine, leading to the formation of N6-(dimethylallyl)adenosine (i(6)A). This chain is tRNA dimethylallyltransferase, found in Lactobacillus acidophilus (strain ATCC 700396 / NCK56 / N2 / NCFM).